We begin with the raw amino-acid sequence, 243 residues long: Probable septum site-determining protein MinC (243 aa).

The protein belongs to the MinC family. Interacts with MinD and FtsZ.

Cell division inhibitor that blocks the formation of polar Z ring septums. Rapidly oscillates between the poles of the cell to destabilize FtsZ filaments that have formed before they mature into polar Z rings. Prevents FtsZ polymerization. In Agathobacter rectalis (strain ATCC 33656 / DSM 3377 / JCM 17463 / KCTC 5835 / VPI 0990) (Eubacterium rectale), this protein is Probable septum site-determining protein MinC.